Here is a 219-residue protein sequence, read N- to C-terminus: Epididymal secretory glutathione peroxidase (219 aa).

The signal sequence occupies residues 1–21; that stretch reads MTVQLGAFYLFPLFMAGFVQT. Cys71 is a catalytic residue.

It belongs to the glutathione peroxidase family. Homotetramer. As to expression, proximal caput epididymis.

Its subcellular location is the secreted. The enzyme catalyses 2 glutathione + H2O2 = glutathione disulfide + 2 H2O. May constitute a glutathione peroxidase-like protective system against peroxide damage in sperm membrane lipids. Since the purified porcine enzyme has very little activity towards hydrogen peroxide or organic hydroperoxides the protective effect is not likely to be exerted by its enzymatic activity. Instead, may protect sperm from premature acrosome reaction in the epididymis by binding to lipid peroxides, which might otherwise interact with phospholipase A2 and induce the acrosome reaction. The sequence is that of Epididymal secretory glutathione peroxidase (GPX5) from Sus scrofa (Pig).